The sequence spans 369 residues: Biotin synthase (369 aa).

A Radical SAM core domain is found at 51-269 (NYVQVSTLLS…IAVARIMMPK (219 aa)). Cys66, Cys70, and Cys73 together coordinate [4Fe-4S] cluster. Residues Cys110, Cys141, Cys201, and Arg273 each coordinate [2Fe-2S] cluster.

Belongs to the radical SAM superfamily. Biotin synthase family. In terms of assembly, homodimer. Requires [4Fe-4S] cluster as cofactor. It depends on [2Fe-2S] cluster as a cofactor.

It catalyses the reaction (4R,5S)-dethiobiotin + (sulfur carrier)-SH + 2 reduced [2Fe-2S]-[ferredoxin] + 2 S-adenosyl-L-methionine = (sulfur carrier)-H + biotin + 2 5'-deoxyadenosine + 2 L-methionine + 2 oxidized [2Fe-2S]-[ferredoxin]. It functions in the pathway cofactor biosynthesis; biotin biosynthesis; biotin from 7,8-diaminononanoate: step 2/2. Its function is as follows. Catalyzes the conversion of dethiobiotin (DTB) to biotin by the insertion of a sulfur atom into dethiobiotin via a radical-based mechanism. This is Biotin synthase from Pseudoalteromonas atlantica (strain T6c / ATCC BAA-1087).